A 297-amino-acid chain; its full sequence is 4-diphosphocytidyl-2-C-methyl-D-erythritol kinase (297 aa).

Lys-10 is a catalytic residue. Residue 94–104 (PVAAGLAGGSS) participates in ATP binding. The active site involves Asp-136.

This sequence belongs to the GHMP kinase family. IspE subfamily.

It catalyses the reaction 4-CDP-2-C-methyl-D-erythritol + ATP = 4-CDP-2-C-methyl-D-erythritol 2-phosphate + ADP + H(+). The protein operates within isoprenoid biosynthesis; isopentenyl diphosphate biosynthesis via DXP pathway; isopentenyl diphosphate from 1-deoxy-D-xylulose 5-phosphate: step 3/6. Functionally, catalyzes the phosphorylation of the position 2 hydroxy group of 4-diphosphocytidyl-2C-methyl-D-erythritol. The sequence is that of 4-diphosphocytidyl-2-C-methyl-D-erythritol kinase from Shouchella clausii (strain KSM-K16) (Alkalihalobacillus clausii).